The following is a 269-amino-acid chain: Putative pyruvate, phosphate dikinase regulatory protein (269 aa).

151–158 (GVSRSSKT) is an ADP binding site.

This sequence belongs to the pyruvate, phosphate/water dikinase regulatory protein family. PDRP subfamily.

It carries out the reaction N(tele)-phospho-L-histidyl/L-threonyl-[pyruvate, phosphate dikinase] + ADP = N(tele)-phospho-L-histidyl/O-phospho-L-threonyl-[pyruvate, phosphate dikinase] + AMP + H(+). The enzyme catalyses N(tele)-phospho-L-histidyl/O-phospho-L-threonyl-[pyruvate, phosphate dikinase] + phosphate + H(+) = N(tele)-phospho-L-histidyl/L-threonyl-[pyruvate, phosphate dikinase] + diphosphate. Its function is as follows. Bifunctional serine/threonine kinase and phosphorylase involved in the regulation of the pyruvate, phosphate dikinase (PPDK) by catalyzing its phosphorylation/dephosphorylation. The protein is Putative pyruvate, phosphate dikinase regulatory protein of Geobacter sulfurreducens (strain ATCC 51573 / DSM 12127 / PCA).